Consider the following 679-residue polypeptide: MISASRAAAARLVGAAASRGPTAARHQDSWNGLSHEAFRLVSRRDYASEAIKGAVVGIDLGTTNSCVAVMEGKQAKVLENAEGARTTPSVVAFTADGERLVGMPAKRQAVTNPNNTFYATKRLIGRRYDDPEVQKDIKNVPFKIVRASNGDAWVEAHGKLYSPSQIGAFVLMKMKETAENYLGHTAKNAVITVPAYFNDSQRQATKDAGQISGLNVLRVINEPTAAALAYGLDKSEDKVIAVYDLGGGTFDISILEIQKGVFEVKSTNGDTFLGGEDFDQALLRHIVKEFKRETGVDLTKDNMALQRVREAAEKAKCELSSSVQTDINLPYLTMDSSGPKHLNMKLTRAQFEGIVTDLIRRTIAPCQKAMQDAEVSKSDIGEVILVGGMTRMPKVQQTVQDLFGRAPSKAVNPDEAVAIGAAIQGGVLAGDVTDVLLLDVTPLSLGIETLGGVFTKLINRNTTIPTKKSQVFSTAADGQTQVEIKVCQGEREMAGDNKLLGQFTLIGIPPAPRGVPQIEVTFDIDANGIVHVSAKDKGTGREQQIVIQSSGGLSKDDIENMVKNAEKYAEEDRRKKERVEAVNMAEGIIHDTETKMEEFKDQLPADECNKLKEEISKMRELLARKDSETGENIRQAASSLQQASLKLFEMAYKKMASEREGSGSSGTGEQKEDQKEEKQ.

Residues 1-46 constitute a mitochondrion transit peptide; sequence MISASRAAAARLVGAAASRGPTAARHQDSWNGLSHEAFRLVSRRDY. The tract at residues 1–432 is interaction with NFS1; it reads MISASRAAAA…IQGGVLAGDV (432 aa). ADP is bound by residues T63 and N64. The interval 63–431 is nucleotide-binding domain (NBD); that stretch reads TNSCVAVMEG…AIQGGVLAGD (369 aa). An N6-acetyllysine modification is found at K76. At T87 the chain carries Phosphothreonine. Residues K135 and K138 each carry the N6-acetyllysine; alternate modification. N6-succinyllysine; alternate is present on residues K135 and K138. Position 143 is an N6-acetyllysine (K143). N6-acetyllysine; alternate is present on K206. K206 carries the post-translational modification N6-succinyllysine; alternate. The residue at position 206 (K206) is an N6-malonyllysine; alternate. N6-acetyllysine is present on residues K234 and K288. K300 carries the post-translational modification N6-acetyllysine; alternate. The residue at position 300 (K300) is an N6-succinyllysine; alternate. 3 residues coordinate ADP: E313, K316, and S320. K368 is subject to N6-succinyllysine. G388 and R391 together coordinate ADP. K394 carries the post-translational modification N6-succinyllysine. S408 carries the post-translational modification Phosphoserine. An interdomain linker region spans residues 432 to 441; sequence VTDVLLLDVT. Residues 432–679 are interaction with FXN and ISCU; the sequence is VTDVLLLDVT…QKEDQKEEKQ (248 aa). The substrate-binding domain (SBD) stretch occupies residues 442 to 679; the sequence is PLSLGIETLG…QKEDQKEEKQ (238 aa). R513 bears the Omega-N-methylarginine mark. N6-acetyllysine; alternate is present on residues K567 and K600. 2 positions are modified to N6-succinyllysine; alternate: K567 and K600. K610 carries the post-translational modification N6-succinyllysine. K612 bears the N6-acetyllysine mark. At K646 the chain carries N6-acetyllysine; alternate. Residue K646 is modified to N6-succinyllysine; alternate. The segment at 656–679 is disordered; sequence ASEREGSGSSGTGEQKEDQKEEKQ. Residues 669–679 are compositionally biased toward basic and acidic residues; the sequence is EQKEDQKEEKQ.

It belongs to the heat shock protein 70 family. Interacts strongly with the intermediate form of FXN and weakly with its mature form. Interacts with HSCB. Associates with the mitochondrial contact site and cristae organizing system (MICOS) complex, composed of at least MICOS10/MIC10, CHCHD3/MIC19, CHCHD6/MIC25, APOOL/MIC27, IMMT/MIC60, APOO/MIC23/MIC26 and QIL1/MIC13. This complex was also known under the names MINOS or MitOS complex. The MICOS complex associates with mitochondrial outer membrane proteins SAMM50, MTX1, MTX2 and DNAJC11, mitochondrial inner membrane protein TMEM11 and with HSPA9. Interacts with DNLZ, the interaction is required to prevent self-aggregation. Interacts with TESPA1. Interacts with PDPN. Interacts with NFU1, NFS1 and ISCU. Interacts with TP53; the interaction promotes TP53 degradation. Interacts (via SBD domain) with UBXN2A; the interaction with UBXN2A inhibits HSPA9 interaction with and degradation of TP53, thereby promotes TP53 translocation to the nucleus. Interacts with ITPR1 AND VDAC1; this interaction couples ITPR1 to VDAC1. Component of the TIM23 mitochondrial inner membrane pre-sequence translocase complex.

Its subcellular location is the mitochondrion. It is found in the nucleus. The protein localises to the nucleolus. It localises to the cytoplasm. The protein resides in the mitochondrion matrix. It carries out the reaction ATP + H2O = ADP + phosphate + H(+). With respect to regulation, the chaperone activity is regulated by ATP-induced allosteric coupling of the nucleotide-binding (NBD) and substrate-binding (SBD) domains. ATP binding in the NBD leads to a conformational change in the NBD, which is transferred through the interdomain linker (IDL) to the substrate-binding domain (SBD). This elicits a reduced substrate affinity and a faster substrate exchange rate. Upon hydrolysis of ATP to ADP, the protein undergoes a conformational change that increases its affinity for substrate proteins. It cycles through repeated phases of ATP hydrolysis and nucleotide exchange, facilitating repeated cycles of substrate binding and release. Functions in collaboration with co-chaperones. Functions with the co-chaperone, DNLZ, to maintain solubility and regulate ATP hydrolysis. Nucleotide exchange factors, GRPEL1 and GRPEL2, accelerate nucleotide exchange. Mitochondrial chaperone that plays a key role in mitochondrial protein import, folding, and assembly. Plays an essential role in the protein quality control system, the correct folding of proteins, the re-folding of misfolded proteins, and the targeting of proteins for subsequent degradation. These processes are achieved through cycles of ATP binding, ATP hydrolysis, and ADP release, mediated by co-chaperones. In mitochondria, it associates with the TIM (translocase of the inner membrane) protein complex to assist in the import and folding of mitochondrial proteins. Plays an important role in mitochondrial iron-sulfur cluster (ISC) biogenesis, interacts with and stabilizes ISC cluster assembly proteins FXN, NFU1, NFS1 and ISCU. Regulates erythropoiesis via stabilization of ISC assembly. Regulates mitochondrial calcium-dependent apoptosis by coupling two calcium channels, ITPR1 and VDAC1, at the mitochondria-associated endoplasmic reticulum (ER) membrane to facilitate calcium transport from the ER lumen to the mitochondria intermembrane space, providing calcium for the downstream calcium channel MCU, which releases it into the mitochondrial matrix. Although primarily located in the mitochondria, it is also found in other cellular compartments. In the cytosol, it associates with proteins involved in signaling, apoptosis, or senescence. It may play a role in cell cycle regulation via its interaction with and promotion of degradation of TP53. May play a role in the control of cell proliferation and cellular aging. Protects against reactive oxygen species (ROS). Extracellular HSPA9 plays a cytoprotective role by preventing cell lysis following immune attack by the membrane attack complex by disrupting formation of the complex. The chain is Stress-70 protein, mitochondrial from Homo sapiens (Human).